The sequence spans 458 residues: Glutamyl-tRNA reductase (458 aa).

Substrate is bound by residues 49–52 (TCNR), Ser109, 114–116 (EQQ), and Gln120. Cys50 (nucleophile) is an active-site residue. 191-196 (GAGAMA) is an NADP(+) binding site.

Belongs to the glutamyl-tRNA reductase family. In terms of assembly, homodimer.

It carries out the reaction (S)-4-amino-5-oxopentanoate + tRNA(Glu) + NADP(+) = L-glutamyl-tRNA(Glu) + NADPH + H(+). Its pathway is porphyrin-containing compound metabolism; protoporphyrin-IX biosynthesis; 5-aminolevulinate from L-glutamyl-tRNA(Glu): step 1/2. Functionally, catalyzes the NADPH-dependent reduction of glutamyl-tRNA(Glu) to glutamate 1-semialdehyde (GSA). The chain is Glutamyl-tRNA reductase from Corynebacterium aurimucosum (strain ATCC 700975 / DSM 44827 / CIP 107346 / CN-1) (Corynebacterium nigricans).